A 735-amino-acid chain; its full sequence is Protein STRUBBELIG-RECEPTOR FAMILY 2 (735 aa).

The first 23 residues, 1-23 (MKTKQQLRFLATILLTTILFVLA), serve as a signal peptide directing secretion. The Extracellular portion of the chain corresponds to 24-297 (KTDTDPLEVL…KKKKKGIGAG (274 aa)). LRR repeat units follow at residues 78–94 (LREL…LQHL), 96–119 (NLKI…PPNA), 120–140 (THIN…LPLM), 142–163 (SLQS…VFSG), 165–187 (QIKE…FGTL), 189–211 (NLTS…ADLP), 212–232 (LADL…HFQS), and 233–253 (IPHL…KPWK). N-linked (GlcNAc...) asparagine glycosylation is found at asparagine 118, asparagine 128, asparagine 147, asparagine 175, and asparagine 189. Residue asparagine 264 is glycosylated (N-linked (GlcNAc...) asparagine). Residues 298–318 (STFLLVGGLALLGTFFALFAV) form a helical membrane-spanning segment. The Cytoplasmic segment spans residues 319 to 735 (RMNHRRAQNL…SSPTFSYLSS (417 aa)). The interval 358 to 378 (PQIKRFQPPPAPQLRHLPSPP) is disordered. Residues 415-695 (FSEENLLGEG…EIVEALTALI (281 aa)) enclose the Protein kinase domain.

It belongs to the protein kinase superfamily. Ser/Thr protein kinase family. As to expression, expressed in seedlings, roots, stems, leaves, flowers and siliques.

The protein resides in the membrane. The polypeptide is Protein STRUBBELIG-RECEPTOR FAMILY 2 (SRF2) (Arabidopsis thaliana (Mouse-ear cress)).